Reading from the N-terminus, the 148-residue chain is 3-dehydroquinate dehydratase (148 aa).

Y23 functions as the Proton acceptor in the catalytic mechanism. Substrate contacts are provided by N74, H80, and D87. H100 (proton donor) is an active-site residue. Substrate is bound by residues 101-102 and R111; that span reads IS.

Belongs to the type-II 3-dehydroquinase family. In terms of assembly, homododecamer.

It catalyses the reaction 3-dehydroquinate = 3-dehydroshikimate + H2O. Its pathway is metabolic intermediate biosynthesis; chorismate biosynthesis; chorismate from D-erythrose 4-phosphate and phosphoenolpyruvate: step 3/7. In terms of biological role, catalyzes a trans-dehydration via an enolate intermediate. The sequence is that of 3-dehydroquinate dehydratase from Halothermothrix orenii (strain H 168 / OCM 544 / DSM 9562).